We begin with the raw amino-acid sequence, 177 residues long: Large ribosomal subunit protein uL6 (177 aa).

This sequence belongs to the universal ribosomal protein uL6 family. Part of the 50S ribosomal subunit.

Its function is as follows. This protein binds to the 23S rRNA, and is important in its secondary structure. It is located near the subunit interface in the base of the L7/L12 stalk, and near the tRNA binding site of the peptidyltransferase center. The chain is Large ribosomal subunit protein uL6 from Rhizobium meliloti (strain 1021) (Ensifer meliloti).